Here is a 245-residue protein sequence, read N- to C-terminus: Haloacid dehalogenase-like hydrolase domain-containing protein At2g33255 (245 aa).

An N-acetylalanine modification is found at threonine 2. The Nucleophile role is filled by aspartate 39. Mg(2+) is bound by residues aspartate 39, aspartate 41, and aspartate 186. The active-site Proton donor is aspartate 41.

This sequence belongs to the HAD-like hydrolase superfamily. DOG/GPP family. Mg(2+) is required as a cofactor.

The polypeptide is Haloacid dehalogenase-like hydrolase domain-containing protein At2g33255 (Arabidopsis thaliana (Mouse-ear cress)).